We begin with the raw amino-acid sequence, 258 residues long: Putative L-lactate dehydrogenase operon regulatory protein (258 aa).

An HTH gntR-type domain is found at 6 to 74 (RRLSDEVADR…RGGGTFIRWR (69 aa)). Positions 34–53 (ERQLAMQLGVSRNSLREALA) form a DNA-binding region, H-T-H motif.

Its function is as follows. May be a regulatory protein for the LCT genes. In Escherichia coli (strain K12), this protein is Putative L-lactate dehydrogenase operon regulatory protein (lldR).